Here is a 98-residue protein sequence, read N- to C-terminus: MIDTEQVKKIAHLARLEITPEQEEQFTGQLSSILEYFDQLSELDTTDVPPTTRAIEIKNITRSDSMQPYPSREELLKEAPEQEGDFFKVPQILNTDEE.

This sequence belongs to the GatC family. As to quaternary structure, heterotrimer of A, B and C subunits.

It carries out the reaction L-glutamyl-tRNA(Gln) + L-glutamine + ATP + H2O = L-glutaminyl-tRNA(Gln) + L-glutamate + ADP + phosphate + H(+). The catalysed reaction is L-aspartyl-tRNA(Asn) + L-glutamine + ATP + H2O = L-asparaginyl-tRNA(Asn) + L-glutamate + ADP + phosphate + 2 H(+). Its function is as follows. Allows the formation of correctly charged Asn-tRNA(Asn) or Gln-tRNA(Gln) through the transamidation of misacylated Asp-tRNA(Asn) or Glu-tRNA(Gln) in organisms which lack either or both of asparaginyl-tRNA or glutaminyl-tRNA synthetases. The reaction takes place in the presence of glutamine and ATP through an activated phospho-Asp-tRNA(Asn) or phospho-Glu-tRNA(Gln). This chain is Aspartyl/glutamyl-tRNA(Asn/Gln) amidotransferase subunit C, found in Gloeothece citriformis (strain PCC 7424) (Cyanothece sp. (strain PCC 7424)).